A 364-amino-acid polypeptide reads, in one-letter code: E3 ubiquitin-protein ligase rnf146 (364 aa).

The tract at residues 18 to 37 is disordered; that stretch reads KKVSGEAVPEGSGSPSSPSL. The segment covering 22–34 has biased composition (low complexity); sequence GEAVPEGSGSPSS. The RING-type zinc finger occupies 42–80; it reads CPICLQSCVHPVRLPCRHIFCFLCVKGASWHSKRCALCR. Residues 102-178 form the WWE domain; the sequence is SATGGCGTGS…EHGRRRRMKR (77 aa). A glycoprotein-binding residues include Tyr118, Arg121, Trp125, Tyr155, Gln164, Arg174, and Lys186. Disordered regions lie at residues 217–262 and 279–364; these read AAAE…PASS and NEQE…VTKV. Composition is skewed to acidic residues over residues 281 to 295 and 308 to 322; these read QEPE…DDSA and TSDD…DENE.

Its subcellular location is the cytoplasm. The protein localises to the cytosol. It is found in the nucleus. The enzyme catalyses S-ubiquitinyl-[E2 ubiquitin-conjugating enzyme]-L-cysteine + [acceptor protein]-L-lysine = [E2 ubiquitin-conjugating enzyme]-L-cysteine + N(6)-ubiquitinyl-[acceptor protein]-L-lysine.. It functions in the pathway protein modification; protein ubiquitination. Its function is as follows. E3 ubiquitin-protein ligase that specifically binds poly-ADP-ribosylated proteins and mediates their ubiquitination and subsequent degradation. May regulate many important biological processes, such as cell survival and DNA damage response. Acts as an activator of the Wnt signaling pathway by mediating the ubiquitination of poly-ADP-ribosylated proteins. Neuroprotective protein. Protects against cell death induced by DNA damaging agents and rescues cells from G1 arrest. Promotes cell survival after gamma-irradiation. Facilitates DNA repair. The protein is E3 ubiquitin-protein ligase rnf146 (rnf146) of Danio rerio (Zebrafish).